Consider the following 280-residue polypeptide: Ribosomal RNA small subunit methyltransferase A (280 aa).

Leu-24, Gly-49, Glu-70, Asp-95, and Asn-118 together coordinate S-adenosyl-L-methionine.

Belongs to the class I-like SAM-binding methyltransferase superfamily. rRNA adenine N(6)-methyltransferase family. RsmA subfamily.

The protein localises to the cytoplasm. It carries out the reaction adenosine(1518)/adenosine(1519) in 16S rRNA + 4 S-adenosyl-L-methionine = N(6)-dimethyladenosine(1518)/N(6)-dimethyladenosine(1519) in 16S rRNA + 4 S-adenosyl-L-homocysteine + 4 H(+). Functionally, specifically dimethylates two adjacent adenosines (A1518 and A1519) in the loop of a conserved hairpin near the 3'-end of 16S rRNA in the 30S particle. May play a critical role in biogenesis of 30S subunits. The sequence is that of Ribosomal RNA small subunit methyltransferase A from Syntrophus aciditrophicus (strain SB).